A 96-amino-acid polypeptide reads, in one-letter code: MPANIRVEVAYALPEKQYLQRVTLDEGATVEQAIIASGLLALRDDIDLAKNKLGIYSRPVKLHDEVHDGDRVEIYRPLIADPKELRRQRAEKSAAK.

This sequence belongs to the UPF0125 (RnfH) family.

The sequence is that of Protein RnfH from Klebsiella pneumoniae (strain 342).